The sequence spans 388 residues: Processive diacylglycerol beta-glucosyltransferase (388 aa).

The protein belongs to the glycosyltransferase 28 family. UgtP subfamily.

It is found in the cell membrane. It carries out the reaction a 1,2-diacyl-3-O-(beta-D-glucopyranosyl)-sn-glycerol + UDP-alpha-D-glucose = a 1,2-diacyl-3-O-(beta-D-Glc-(1-&gt;6)-beta-D-Glc)-sn-glycerol + UDP + H(+). It catalyses the reaction a 1,2-diacyl-3-O-(beta-D-Glc-(1-&gt;6)-beta-D-Glc)-sn-glycerol + UDP-alpha-D-glucose = a 1,2-diacyl-3-O-(beta-D-Glc-(1-&gt;6)-beta-D-Glc-(1-&gt;6)-beta-D-Glc)-sn-glycerol + UDP + H(+). The catalysed reaction is a 1,2-diacyl-sn-glycerol + UDP-alpha-D-glucose = a 1,2-diacyl-3-O-(beta-D-glucopyranosyl)-sn-glycerol + UDP + H(+). Its pathway is glycolipid metabolism; diglucosyl-diacylglycerol biosynthesis. In terms of biological role, processive glucosyltransferase involved in the biosynthesis of both the bilayer- and non-bilayer-forming membrane glucolipids. Is able to successively transfer up to three glucosyl residues to diacylglycerol (DAG), thereby catalyzing the formation of beta-monoglucosyl-DAG (3-O-(beta-D-glucopyranosyl)-1,2-diacyl-sn-glycerol), beta-diglucosyl-DAG (3-O-(beta-D-glucopyranosyl-beta-(1-&gt;6)-D-glucopyranosyl)-1,2-diacyl-sn-glycerol) and beta-triglucosyl-DAG (3-O-(beta-D-glucopyranosyl-beta-(1-&gt;6)-D-glucopyranosyl-beta-(1-&gt;6)-D-glucopyranosyl)-1,2-diacyl-sn-glycerol). Beta-diglucosyl-DAG is the predominant glycolipid found in Bacillales and is also used as a membrane anchor for lipoteichoic acid (LTA). This Bacillus cereus (strain ZK / E33L) protein is Processive diacylglycerol beta-glucosyltransferase.